We begin with the raw amino-acid sequence, 180 residues long: Large ribosomal subunit protein uL6 (180 aa).

Residues 158–180 are disordered; it reads YSGKGISYKGEKIRRKEGKTASK.

Belongs to the universal ribosomal protein uL6 family. As to quaternary structure, part of the 50S ribosomal subunit.

This protein binds to the 23S rRNA, and is important in its secondary structure. It is located near the subunit interface in the base of the L7/L12 stalk, and near the tRNA binding site of the peptidyltransferase center. This chain is Large ribosomal subunit protein uL6, found in Mycoplasmopsis synoviae (strain 53) (Mycoplasma synoviae).